The primary structure comprises 101 residues: Iron-sulfur cluster assembly protein CyaY (101 aa).

The protein belongs to the frataxin family.

Involved in iron-sulfur (Fe-S) cluster assembly. May act as a regulator of Fe-S biogenesis. This chain is Iron-sulfur cluster assembly protein CyaY, found in Haemophilus influenzae (strain PittEE).